A 458-amino-acid polypeptide reads, in one-letter code: Ribosomal protein uS12 methylthiotransferase RimO (458 aa).

An MTTase N-terminal domain is found at 6-116; sequence PKVGFVSLGC…VMEAVHAALP (111 aa). [4Fe-4S] cluster-binding residues include cysteine 15, cysteine 51, cysteine 80, cysteine 147, cysteine 151, and cysteine 154. A Radical SAM core domain is found at 133–371; it reads LTPRHYAYLK…AKQAQISALR (239 aa). One can recognise a TRAM domain in the interval 373–441; it reads ESKIGSVQQC…EHDLFGDALP (69 aa).

This sequence belongs to the methylthiotransferase family. RimO subfamily. [4Fe-4S] cluster serves as cofactor.

Its subcellular location is the cytoplasm. The enzyme catalyses L-aspartate(89)-[ribosomal protein uS12]-hydrogen + (sulfur carrier)-SH + AH2 + 2 S-adenosyl-L-methionine = 3-methylsulfanyl-L-aspartate(89)-[ribosomal protein uS12]-hydrogen + (sulfur carrier)-H + 5'-deoxyadenosine + L-methionine + A + S-adenosyl-L-homocysteine + 2 H(+). In terms of biological role, catalyzes the methylthiolation of an aspartic acid residue of ribosomal protein uS12. This Xanthomonas euvesicatoria pv. vesicatoria (strain 85-10) (Xanthomonas campestris pv. vesicatoria) protein is Ribosomal protein uS12 methylthiotransferase RimO.